A 431-amino-acid chain; its full sequence is 3-phosphoshikimate 1-carboxyvinyltransferase (431 aa).

3-phosphoshikimate contacts are provided by Lys-21, Ser-22, and Arg-26. A phosphoenolpyruvate-binding site is contributed by Lys-21. Gly-93 and Arg-121 together coordinate phosphoenolpyruvate. 3-phosphoshikimate-binding residues include Ser-166, Gln-168, Ser-192, Asp-317, and Lys-344. Gln-168 is a phosphoenolpyruvate binding site. The active-site Proton acceptor is Asp-317. Phosphoenolpyruvate contacts are provided by Arg-348 and Arg-390.

It belongs to the EPSP synthase family. As to quaternary structure, monomer.

Its subcellular location is the cytoplasm. The catalysed reaction is 3-phosphoshikimate + phosphoenolpyruvate = 5-O-(1-carboxyvinyl)-3-phosphoshikimate + phosphate. It functions in the pathway metabolic intermediate biosynthesis; chorismate biosynthesis; chorismate from D-erythrose 4-phosphate and phosphoenolpyruvate: step 6/7. In terms of biological role, catalyzes the transfer of the enolpyruvyl moiety of phosphoenolpyruvate (PEP) to the 5-hydroxyl of shikimate-3-phosphate (S3P) to produce enolpyruvyl shikimate-3-phosphate and inorganic phosphate. This Herpetosiphon aurantiacus (strain ATCC 23779 / DSM 785 / 114-95) protein is 3-phosphoshikimate 1-carboxyvinyltransferase.